The chain runs to 165 residues: Probable bacterial non-heme ferritin-like protein (165 aa).

The region spanning 1–145 (MLSENVVKLL…SILDKLNFLG (145 aa)) is the Ferritin-like diiron domain. Fe cation is bound by residues glutamate 17, glutamate 50, histidine 53, glutamate 94, and glutamine 127.

It belongs to the ferritin family. Prokaryotic subfamily.

The protein localises to the cytoplasm. The sequence is that of Probable bacterial non-heme ferritin-like protein (ftnB) from Haemophilus influenzae (strain ATCC 51907 / DSM 11121 / KW20 / Rd).